The following is a 359-amino-acid chain: Protein mab-21-like 2 (359 aa).

It belongs to the mab-21 family.

It localises to the nucleus. Its subcellular location is the cytoplasm. Its function is as follows. Required for several aspects of embryonic development including normal development of the eye. This chain is Protein mab-21-like 2 (MAB21L2), found in Homo sapiens (Human).